Consider the following 827-residue polypeptide: DNA ligase (827 aa).

NAD(+) contacts are provided by residues Asp45 to Asp49, Ser94 to Leu95, and Glu128. The N6-AMP-lysine intermediate role is filled by Lys130. Arg151, Glu188, Lys304, and Lys328 together coordinate NAD(+). Zn(2+) is bound by residues Cys451, Cys454, Cys475, and Cys481. Residues Ala748–Ala827 enclose the BRCT domain.

It belongs to the NAD-dependent DNA ligase family. LigA subfamily. The cofactor is Mg(2+). It depends on Mn(2+) as a cofactor.

It catalyses the reaction NAD(+) + (deoxyribonucleotide)n-3'-hydroxyl + 5'-phospho-(deoxyribonucleotide)m = (deoxyribonucleotide)n+m + AMP + beta-nicotinamide D-nucleotide.. In terms of biological role, DNA ligase that catalyzes the formation of phosphodiester linkages between 5'-phosphoryl and 3'-hydroxyl groups in double-stranded DNA using NAD as a coenzyme and as the energy source for the reaction. It is essential for DNA replication and repair of damaged DNA. In Methylobacterium sp. (strain 4-46), this protein is DNA ligase.